The chain runs to 182 residues: Adenine phosphoribosyltransferase (182 aa).

This sequence belongs to the purine/pyrimidine phosphoribosyltransferase family. Homodimer.

It localises to the cytoplasm. It catalyses the reaction AMP + diphosphate = 5-phospho-alpha-D-ribose 1-diphosphate + adenine. Its pathway is purine metabolism; AMP biosynthesis via salvage pathway; AMP from adenine: step 1/1. Catalyzes a salvage reaction resulting in the formation of AMP, that is energically less costly than de novo synthesis. This Campylobacter hominis (strain ATCC BAA-381 / DSM 21671 / CCUG 45161 / LMG 19568 / NCTC 13146 / CH001A) protein is Adenine phosphoribosyltransferase.